The sequence spans 347 residues: UDP-3-O-acylglucosamine N-acyltransferase (347 aa).

The active-site Proton acceptor is the His-242.

Belongs to the transferase hexapeptide repeat family. LpxD subfamily. Homotrimer.

The enzyme catalyses a UDP-3-O-[(3R)-3-hydroxyacyl]-alpha-D-glucosamine + a (3R)-hydroxyacyl-[ACP] = a UDP-2-N,3-O-bis[(3R)-3-hydroxyacyl]-alpha-D-glucosamine + holo-[ACP] + H(+). Its pathway is bacterial outer membrane biogenesis; LPS lipid A biosynthesis. Its function is as follows. Catalyzes the N-acylation of UDP-3-O-acylglucosamine using 3-hydroxyacyl-ACP as the acyl donor. Is involved in the biosynthesis of lipid A, a phosphorylated glycolipid that anchors the lipopolysaccharide to the outer membrane of the cell. The sequence is that of UDP-3-O-acylglucosamine N-acyltransferase from Dechloromonas aromatica (strain RCB).